Reading from the N-terminus, the 919-residue chain is Beta-galactosidase 15 (919 aa).

A signal peptide spans Met-1 to Ala-31. Residue Asn-63 is glycosylated (N-linked (GlcNAc...) asparagine). Glu-220 acts as the Proton donor in catalysis. The active-site Nucleophile is Glu-289. Asn-412, Asn-530, Asn-546, and Asn-855 each carry an N-linked (GlcNAc...) asparagine glycan. The region spanning Asn-822 to Ser-907 is the SUEL-type lectin domain.

Belongs to the glycosyl hydrolase 35 family.

The protein resides in the secreted. It localises to the extracellular space. It is found in the apoplast. It catalyses the reaction Hydrolysis of terminal non-reducing beta-D-galactose residues in beta-D-galactosides.. The chain is Beta-galactosidase 15 from Oryza sativa subsp. japonica (Rice).